Consider the following 371-residue polypeptide: Nicotinate-nucleotide pyrophosphorylase [carboxylating], chloroplastic (371 aa).

The N-terminal 48 residues, methionine 1–arginine 48, are a transit peptide targeting the chloroplast. Substrate contacts are provided by residues arginine 162, threonine 193–lysine 195, arginine 217, lysine 227, glutamate 260, aspartate 287, serine 319–asparagine 321, and serine 340–alanine 342.

It belongs to the NadC/ModD family.

It is found in the plastid. Its subcellular location is the chloroplast. The catalysed reaction is nicotinate beta-D-ribonucleotide + CO2 + diphosphate = quinolinate + 5-phospho-alpha-D-ribose 1-diphosphate + 2 H(+). It functions in the pathway cofactor biosynthesis; NAD(+) biosynthesis; nicotinate D-ribonucleotide from quinolinate: step 1/1. Involved in the catabolism of quinolinic acid (QA). In Oryza sativa subsp. japonica (Rice), this protein is Nicotinate-nucleotide pyrophosphorylase [carboxylating], chloroplastic.